The following is an 898-amino-acid chain: DNA-directed DNA polymerase (898 aa).

Residues 101–337 (YDRKFVRVAN…VQAIDKIRGF (237 aa)) form a 3'-5'exonuclease region. Residues D112, E114, and D219 each coordinate Mg(2+). The beta hairpin stretch occupies residues 245-261 (VKSKLIQNMYGSKEIYS). Residues D324, D408, and L409 each contribute to the Mg(2+) site. The tract at residues 377 to 898 (IPQQGSHVKQ…EKASLDFLFG (522 aa)) is polymerase. Substrate contacts are provided by residues 411–413 (SLY), R479, and K557. Mg(2+) is bound at residue D620. The tract at residues 702–705 (KKRY) is binding of DNA in B-conformation. An interaction with the polymerase clamp region spans residues 893-898 (LDFLFG).

Belongs to the DNA polymerase type-B family. In terms of assembly, interacts with the polymerase clamp; this interaction constitutes the polymerase holoenzyme. Interacts with the helicase assembly factor. Part of the replicase complex that includes the DNA polymerase, the polymerase clamp, the clamp loader complex, the single-stranded DNA binding protein, the primase, the helicase and the helicase assembly factor. Mg(2+) is required as a cofactor.

The enzyme catalyses DNA(n) + a 2'-deoxyribonucleoside 5'-triphosphate = DNA(n+1) + diphosphate. Functionally, replicates the viral genomic DNA. This polymerase possesses two enzymatic activities: DNA synthesis (polymerase) and an exonucleolytic activity that degrades single-stranded DNA in the 3'- to 5'-direction for proofreading purpose. The polypeptide is DNA-directed DNA polymerase (43) (Enterobacteria phage T4 (Bacteriophage T4)).